The following is a 125-amino-acid chain: Small ribosomal subunit protein uS12m (125 aa).

Disordered regions lie at residues 1-50 and 106-125; these read MPTL…SAPR and GIPN…PKSI. Over residues 10 to 23 the composition is skewed to basic and acidic residues; sequence HGREEKRRTDRTRA.

This sequence belongs to the universal ribosomal protein uS12 family.

The protein localises to the mitochondrion. Protein S12 is involved in the translation initiation step. The chain is Small ribosomal subunit protein uS12m (RPS12) from Magnolia soulangeana (Saucer magnolia).